We begin with the raw amino-acid sequence, 610 residues long: Putative protein tag-250 (610 aa).

Tudor domains follow at residues 149–260 (VALK…LLPP) and 386–506 (MPMS…KIGG).

This is Putative protein tag-250 (tag-250) from Caenorhabditis elegans.